The following is a 123-amino-acid chain: UPF0102 protein Csal_2201 (123 aa).

The protein belongs to the UPF0102 family.

The polypeptide is UPF0102 protein Csal_2201 (Chromohalobacter salexigens (strain ATCC BAA-138 / DSM 3043 / CIP 106854 / NCIMB 13768 / 1H11)).